We begin with the raw amino-acid sequence, 405 residues long: Nuclear RNA export factor 2 (405 aa).

The interval 1–33 (MRGQNRRGYRNIEGRLSLSSHSSHSSPRQTHVT) is disordered. Low complexity predominate over residues 16-26 (LSLSSHSSHSS). The region spanning 26–94 (SPRQTHVTNL…SVVLQHIGYK (69 aa)) is the RRM domain. LRR repeat units follow at residues 97-118 (RISG…SSLS) and 123-144 (FLKF…KKLG). An NTF2 domain is found at 215–382 (LVEEFIITYY…VAIVSDQLFI (168 aa)).

The protein belongs to the NXF family.

It is found in the nucleus. Functionally, involved in the export of cellular mRNA to the cytoplasm. Plays a role in the nuclear retention of unspliced mRNAs. This Caenorhabditis elegans protein is Nuclear RNA export factor 2.